The chain runs to 65 residues: UPF0434 protein CPS_2127 (65 aa).

It belongs to the UPF0434 family.

The sequence is that of UPF0434 protein CPS_2127 from Colwellia psychrerythraea (strain 34H / ATCC BAA-681) (Vibrio psychroerythus).